Reading from the N-terminus, the 70-residue chain is DNA-directed RNA polymerases I, II, and III subunit rpabc5 (70 aa).

Zn(2+)-binding residues include C7, C10, C44, and C45.

It belongs to the archaeal Rpo10/eukaryotic RPB10 RNA polymerase subunit family. In terms of assembly, component of the RNA polymerase I (Pol I), RNA polymerase II (Pol II) and RNA polymerase III (Pol III) complexes.

It is found in the nucleus. Functionally, DNA-dependent RNA polymerase catalyzes the transcription of DNA into RNA using the four ribonucleoside triphosphates as substrates. Common component of RNA polymerases I, II and III which synthesize ribosomal RNA precursors, mRNA precursors and many functional non-coding RNAs, and a small RNAs, such as 5S rRNA and tRNAs, respectively. Pol II is the central component of the basal RNA polymerase II transcription machinery. Pols are composed of mobile elements that move relative to each other. In Pol II, RBP10 is part of the core element with the central large cleft. This Dictyostelium discoideum (Social amoeba) protein is DNA-directed RNA polymerases I, II, and III subunit rpabc5 (polr2l).